The chain runs to 293 residues: Probable adenylate kinase 1, chloroplastic (293 aa).

Residues 1 to 26 (MAAVQRLLRASASGGAAAAAAAARRR) constitute a mitochondrion transit peptide. 70 to 75 (GVGKGT) contributes to the ATP binding site. Positions 90–119 (ATGDLVRDELASSGPLSVQLAEIVNQGKLV) are NMP. AMP-binding positions include threonine 91, arginine 96, 117–119 (KLV), 147–150 (GFPR), and glutamine 154. Positions 183–231 (GRRICGQCGKNFNLACIDVKGENGLPPIYMAPLLPPNNCMSKLITRADD) are LID. ATP-binding positions include arginine 184 and 193–194 (NF). The AMP site is built by arginine 228 and arginine 239.

It belongs to the adenylate kinase family.

The protein resides in the mitochondrion. It catalyses the reaction AMP + ATP = 2 ADP. In terms of biological role, catalyzes the reversible transfer of the terminal phosphate group between ATP and AMP. Plays an important role in cellular energy homeostasis and in adenine nucleotide metabolism. This Oryza sativa subsp. japonica (Rice) protein is Probable adenylate kinase 1, chloroplastic.